A 433-amino-acid chain; its full sequence is Legumain (433 aa).

A signal peptide spans 1 to 17 (MVWKVAVFLSVALGIGA). Asn91 carries N-linked (GlcNAc...) asparagine glycosylation. Residue His148 is part of the active site. N-linked (GlcNAc...) asparagine glycosylation occurs at Asn167. Cys189 (nucleophile) is an active-site residue. 2 N-linked (GlcNAc...) asparagine glycosylation sites follow: Asn263 and Asn272. Residues 324–433 (DLEESRQLTE…SMDHVCLGHY (110 aa)) constitute a propeptide that is removed on maturation. 2 disulfides stabilise this stretch: Cys378–Cys412 and Cys390–Cys429.

It belongs to the peptidase C13 family. Homodimer before autocatalytic removal of the propeptide. Monomer after autocatalytic processing. May interact with integrins. In terms of processing, activated by autocatalytic processing at pH 4. As to expression, ubiquitous. Particularly abundant in kidney, heart and placenta.

The protein localises to the lysosome. It carries out the reaction Hydrolysis of proteins and small molecule substrates at -Asn-|-Xaa- bonds.. Its activity is regulated as follows. Inhibited by CST6. In terms of biological role, has a strict specificity for hydrolysis of asparaginyl bonds. Can also cleave aspartyl bonds slowly, especially under acidic conditions. Involved in the processing of proteins for MHC class II antigen presentation in the lysosomal/endosomal system. Also involved in MHC class I antigen presentation in cross-presenting dendritic cells by mediating cleavage and maturation of Perforin-2 (MPEG1), thereby promoting antigen translocation in the cytosol. Required for normal lysosomal protein degradation in renal proximal tubules. Required for normal degradation of internalized EGFR. Plays a role in the regulation of cell proliferation via its role in EGFR degradation. This chain is Legumain, found in Homo sapiens (Human).